Consider the following 286-residue polypeptide: D-tagatose-1,6-bisphosphate aldolase subunit KbaY (286 aa).

Residue Asp-82 is the Proton donor of the active site. The Zn(2+) site is built by His-83 and His-180. Gly-181 serves as a coordination point for dihydroxyacetone phosphate. Residue His-208 coordinates Zn(2+). Dihydroxyacetone phosphate contacts are provided by residues 209 to 211 (GAS) and 230 to 233 (NVAT).

It belongs to the class II fructose-bisphosphate aldolase family. TagBP aldolase KbaY subfamily. As to quaternary structure, homotetramer. Forms a complex with KbaZ. Zn(2+) is required as a cofactor.

It carries out the reaction D-tagatofuranose 1,6-bisphosphate = D-glyceraldehyde 3-phosphate + dihydroxyacetone phosphate. The protein operates within carbohydrate metabolism; D-tagatose 6-phosphate degradation; D-glyceraldehyde 3-phosphate and glycerone phosphate from D-tagatose 6-phosphate: step 2/2. Functionally, catalytic subunit of the tagatose-1,6-bisphosphate aldolase KbaYZ, which catalyzes the reversible aldol condensation of dihydroxyacetone phosphate (DHAP or glycerone-phosphate) with glyceraldehyde 3-phosphate (G3P) to produce tagatose 1,6-bisphosphate (TBP). Requires KbaZ subunit for full activity and stability. The protein is D-tagatose-1,6-bisphosphate aldolase subunit KbaY of Escherichia coli O45:K1 (strain S88 / ExPEC).